A 211-amino-acid chain; its full sequence is Shikimate kinase (211 aa).

Residues 1–22 (MHFRYNYRMQRSKTPNTKNSDT) are disordered. The segment covering 12-22 (SKTPNTKNSDT) has biased composition (polar residues). 36 to 41 (GSGKTT) serves as a coordination point for ATP. Threonine 40 is a Mg(2+) binding site. Residues aspartate 58, arginine 82, and glycine 104 each coordinate substrate. Arginine 142 lines the ATP pocket. A substrate-binding site is contributed by arginine 161. ATP is bound at residue glutamine 178.

It belongs to the shikimate kinase family. As to quaternary structure, monomer. It depends on Mg(2+) as a cofactor.

It localises to the cytoplasm. The catalysed reaction is shikimate + ATP = 3-phosphoshikimate + ADP + H(+). It participates in metabolic intermediate biosynthesis; chorismate biosynthesis; chorismate from D-erythrose 4-phosphate and phosphoenolpyruvate: step 5/7. Catalyzes the specific phosphorylation of the 3-hydroxyl group of shikimic acid using ATP as a cosubstrate. This is Shikimate kinase from Nitrosomonas europaea (strain ATCC 19718 / CIP 103999 / KCTC 2705 / NBRC 14298).